The sequence spans 303 residues: tRNA dimethylallyltransferase 1 (303 aa).

17–24 is a binding site for ATP; that stretch reads GPTACGKT. 19-24 provides a ligand contact to substrate; it reads TACGKT. The tract at residues 42-45 is interaction with substrate tRNA; that stretch reads DSRQ.

It belongs to the IPP transferase family. In terms of assembly, monomer. Mg(2+) serves as cofactor.

It catalyses the reaction adenosine(37) in tRNA + dimethylallyl diphosphate = N(6)-dimethylallyladenosine(37) in tRNA + diphosphate. In terms of biological role, catalyzes the transfer of a dimethylallyl group onto the adenine at position 37 in tRNAs that read codons beginning with uridine, leading to the formation of N6-(dimethylallyl)adenosine (i(6)A). In Hahella chejuensis (strain KCTC 2396), this protein is tRNA dimethylallyltransferase 1.